We begin with the raw amino-acid sequence, 90 residues long: UPF0297 protein OEOE_1166 (90 aa).

The protein belongs to the UPF0297 family.

This chain is UPF0297 protein OEOE_1166, found in Oenococcus oeni (strain ATCC BAA-331 / PSU-1).